Consider the following 137-residue polypeptide: Protein MGF 110-7L (137 aa).

Positions M1 to S20 are cleaved as a signal peptide. 3 N-linked (GlcNAc...) asparagine; by host glycosylation sites follow: N69, N70, and N105.

This sequence belongs to the asfaviruses V110 family.

The chain is Protein MGF 110-7L from Ornithodoros (relapsing fever ticks).